A 642-amino-acid polypeptide reads, in one-letter code: MMYVSARSGSAKRSISSLPHLSQRFKQTENEIVQMFSVPNHEESEKPQEKWKLSRKDPSVRMLDERFIRIVKIFKWGPDAEKALEVLKLKVDHRLVRSILEIDVEINVKIQFFKWAGKRRNFQHDCSTYMTLIRCLEEARLYGEMYRTIQEVVRNTYVSVSPAVLSELVKALGRAKMVSKALSVFYQAKGRKCKPTSSTYNSVILMLMQEGQHEKVHEVYTEMCNEGDCFPDTITYSALISSYEKLGRNDSAIRLFDEMKDNCMQPTEKIYTTLLGIYFKVGKVEKALDLFEEMKRAGCSPTVYTYTELIKGLGKAGRVDEAYGFYKDMLRDGLTPDVVFLNNLMNILGKVGRVEELTNVFSEMGMWRCTPTVVSYNTVIKALFESKAHVSEVSSWFDKMKADSVSPSEFTYSILIDGYCKTNRVEKALLLLEEMDEKGFPPCPAAYCSLINALGKAKRYEAANELFKELKENFGNVSSRVYAVMIKHFGKCGKLSEAVDLFNEMKNQGSGPDVYAYNALMSGMVKAGMINEANSLLRKMEENGCRADINSHNIILNGFARTGVPRRAIEMFETIKHSGIKPDGVTYNTLLGCFAHAGMFEEAARMMREMKDKGFEYDAITYSSILDAVGNVDHEKDDVSSF.

PPR repeat units follow at residues Asp-125–Ser-159, Ser-161–Pro-195, Thr-196–Phe-230, Asp-232–Pro-266, Thr-267–Pro-301, Thr-302–Pro-336, Asp-337–Pro-371, Thr-372–Pro-407, Ser-408–Pro-442, Cys-443–Asn-473, Ser-478–Pro-512, Asp-513–Ala-547, Asp-548–Pro-582, and Asp-583–Tyr-617.

It belongs to the PPR family. P subfamily.

The protein is Pentatricopeptide repeat-containing protein At3g16010 of Arabidopsis thaliana (Mouse-ear cress).